Reading from the N-terminus, the 354-residue chain is NADH-quinone oxidoreductase subunit H (354 aa).

Transmembrane regions (helical) follow at residues 23–43 (LVRA…LILW), 91–111 (YIIA…VIPF), 124–144 (LLYV…AGWA), 162–182 (ISYE…TGSL), 203–223 (ILSW…ISGV), 250–270 (GMAF…ISAL), 291–311 (IPGF…FIWL), and 330–350 (IFIP…VSPW).

Belongs to the complex I subunit 1 family. As to quaternary structure, NDH-1 is composed of 14 different subunits. Subunits NuoA, H, J, K, L, M, N constitute the membrane sector of the complex.

It is found in the cell inner membrane. It catalyses the reaction a quinone + NADH + 5 H(+)(in) = a quinol + NAD(+) + 4 H(+)(out). In terms of biological role, NDH-1 shuttles electrons from NADH, via FMN and iron-sulfur (Fe-S) centers, to quinones in the respiratory chain. The immediate electron acceptor for the enzyme in this species is believed to be ubiquinone. Couples the redox reaction to proton translocation (for every two electrons transferred, four hydrogen ions are translocated across the cytoplasmic membrane), and thus conserves the redox energy in a proton gradient. This subunit may bind ubiquinone. This is NADH-quinone oxidoreductase subunit H from Ralstonia pickettii (strain 12J).